Consider the following 1075-residue polypeptide: Atos homolog protein A (1075 aa).

The interval 24 to 32 is transactivation domain 1 (TAD1); that stretch reads ALLITEGRT. 3 disordered regions span residues 430 to 469, 570 to 592, and 703 to 766; these read FGSPEFGSPGDSREGKVREKSETRPGETCTSHSLYPRQPA, YSPQEKPLKPEVRTQHQNHPDSI, and LNKN…PHSV. A compositionally biased stretch (basic and acidic residues) spans 440–454; that stretch reads DSREGKVREKSETRP. Polar residues predominate over residues 703 to 712; it reads LNKNKTNCSS. Positions 746–759 are enriched in basic and acidic residues; it reads DRLKTEQEAKRDSG. A required for macropage invasion region spans residues 878–935; that stretch reads LLGNFEESVLNYRLDPLGIVDGFTAEVGASGTFCPTHLTLPVEVSFYSVSDDNAPSPY. The transactivation domain 2 (TAD2) stretch occupies residues 962 to 970; sequence FNPNKTVVK.

This sequence belongs to the ATOS family.

The protein resides in the nucleus. Functionally, transcription regulator that syncronizes transcriptional and translational programs to promote macrophage invasion of tissues. This chain is Atos homolog protein A (Atosa), found in Mus musculus (Mouse).